The following is a 259-amino-acid chain: Ribosomal RNA large subunit methyltransferase E (259 aa).

Residues Gly-58, Trp-60, Asp-78, Asp-96, and Asp-120 each contribute to the S-adenosyl-L-methionine site. The Proton acceptor role is filled by Lys-160.

The protein belongs to the class I-like SAM-binding methyltransferase superfamily. RNA methyltransferase RlmE family.

Its subcellular location is the cytoplasm. The catalysed reaction is uridine(2552) in 23S rRNA + S-adenosyl-L-methionine = 2'-O-methyluridine(2552) in 23S rRNA + S-adenosyl-L-homocysteine + H(+). Specifically methylates the uridine in position 2552 of 23S rRNA at the 2'-O position of the ribose in the fully assembled 50S ribosomal subunit. This is Ribosomal RNA large subunit methyltransferase E from Methanococcus vannielii (strain ATCC 35089 / DSM 1224 / JCM 13029 / OCM 148 / SB).